The following is a 350-amino-acid chain: Casein kinase II subunit alpha' (350 aa).

Positions 40–325 constitute a Protein kinase domain; it reads YQLVRKLGRG…AKEAMEHPYF (286 aa). Residues 46–54 and K69 contribute to the ATP site; that span reads LGRGKYSEV. The active-site Proton acceptor is D157.

Belongs to the protein kinase superfamily. Ser/Thr protein kinase family. CK2 subfamily. In terms of assembly, tetramer composed of an alpha chain, an alpha' and two beta chains.

It carries out the reaction L-seryl-[protein] + ATP = O-phospho-L-seryl-[protein] + ADP + H(+). The enzyme catalyses L-threonyl-[protein] + ATP = O-phospho-L-threonyl-[protein] + ADP + H(+). Its function is as follows. Casein kinases are operationally defined by their preferential utilization of acidic proteins such as caseins as substrates. The alpha and alpha' chains contain the catalytic site. Participates in Wnt signaling. The chain is Casein kinase II subunit alpha' from Gallus gallus (Chicken).